The primary structure comprises 868 residues: Leucine--tRNA ligase (868 aa).

Positions Pro42–His52 match the 'HIGH' region motif. A 'KMSKS' region motif is present at residues Lys627–Ser631. An ATP-binding site is contributed by Lys630.

This sequence belongs to the class-I aminoacyl-tRNA synthetase family.

It localises to the cytoplasm. It catalyses the reaction tRNA(Leu) + L-leucine + ATP = L-leucyl-tRNA(Leu) + AMP + diphosphate. The chain is Leucine--tRNA ligase from Pseudomonas fluorescens (strain Pf0-1).